The primary structure comprises 309 residues: Porphobilinogen deaminase (309 aa).

Cys-241 is subject to S-(dipyrrolylmethanemethyl)cysteine.

It belongs to the HMBS family. Monomer. Requires dipyrromethane as cofactor.

It catalyses the reaction 4 porphobilinogen + H2O = hydroxymethylbilane + 4 NH4(+). It participates in porphyrin-containing compound metabolism; protoporphyrin-IX biosynthesis; coproporphyrinogen-III from 5-aminolevulinate: step 2/4. Its function is as follows. Tetrapolymerization of the monopyrrole PBG into the hydroxymethylbilane pre-uroporphyrinogen in several discrete steps. This Campylobacter concisus (strain 13826) protein is Porphobilinogen deaminase.